A 422-amino-acid chain; its full sequence is Mannose-1-phosphate guanylyltransferase regulatory subunit alpha-B (422 aa).

The substrate-binding domain stretch occupies residues 2-253; that stretch reads LKAIILIGGP…QHFWSQIKSA (252 aa). E85 and Q249 together coordinate GDP-alpha-D-mannose. The segment at 275–422 is hexapeptide repeat domain; sequence LATNQGGTPK…NRSFKNQIIL (148 aa). Residues 358 to 386 form a C-loop region; it reads TPSDPNPNDPYAKIDSETLFRDGGLTPSI.

Belongs to the transferase hexapeptide repeat family. In terms of assembly, component of the GMPPA-GMPPB mannose-1-phosphate guanylyltransferase complex composed of 4 GMPPA subunits and 8 GMPPB subunits; the complex is organized into three layers, a central layer made up of 2 GMPPA dimers sandwiched between two layers each made up of 2 GMPPB dimers.

The protein operates within nucleotide-sugar biosynthesis; GDP-alpha-D-mannose biosynthesis; GDP-alpha-D-mannose from alpha-D-mannose 1-phosphate (GTP route): step 1/1. Regulatory subunit of the GMPPA-GMPPB mannose-1-phosphate guanylyltransferase complex; reduces the catalytic activity of GMPPB when part of the complex. Mediates allosteric feedback inhibition of GMPPB catalytic activity upon binding GDP-alpha-D-mannose. Together with GMPPB regulates GDP-alpha-D-mannose levels. One of two paralogs (gmppaa and gmppab) that may have redundant functions. In Danio rerio (Zebrafish), this protein is Mannose-1-phosphate guanylyltransferase regulatory subunit alpha-B (gmppab).